The chain runs to 491 residues: Cytochrome P450 monooxygenase olcB (491 aa).

Residues 5-27 (LLLSLSVCLLYVFITAFWNLYIH) form a helical membrane-spanning segment. A heme-binding site is contributed by cysteine 435.

This sequence belongs to the cytochrome P450 family. The cofactor is heme.

The protein resides in the membrane. It participates in secondary metabolite biosynthesis; terpenoid biosynthesis. Its function is as follows. Cytochrome P450 monooxygenase; part of the gene cluster that mediates the biosynthesis of 15-deoxyoxalicine B. The first step of the pathway is the synthesis of nicotinyl-CoA from nicotinic acid by the nicotinic acid-CoA ligase olcI. Nicotinyl-CoA is then a substrate of polyketide synthase olcA to produce 4-hydroxy-6-(3-pyridinyl)-2H-pyran-2-one (HPPO) which is further prenylated by the polyprenyl transferase olcH to yield geranylgeranyl-HPPO. Geranylgeranyl pyrophosphate is provided by the cluster-specific geranylgeranyl pyrophosphate synthase olcC. The FAD-dependent monooxygenase olcE catalyzes the epoxidation of geranylgeranyl-HPPO and the terpene cyclase olcD catalyzes the cyclization of the terpenoid component, resulting in the formation of the tricyclic terpene moiety seen in predecaturin E. The cytochrome P450 monooxygenase then catalyzes the allylic oxidation of predecaturin E, which is followed by spirocylization with concomitant loss of one molecule of water to form decaturin E. Decaturin E is the substrate of the cytochrome P450 monooxygenase olcJ which hydroxylates it at the C-29 position to form decaturin F. The short-chain dehydrogenase/reductase olcF may catalyze the oxidation of decaturin F to generate the 29-hydroxyl-27-one intermediate, and subsequent hemiacetal formation probably leads to the formation of decaturin C. The dioxygenase olcK may be a peroxisomal enzyme that catalyzes the hydroxylation of decaturin C into decaturin A once decaturin C is shuttled into the peroxisome by the MFS transporter olcL. Finally the cytochrome P450 monooxygenase olcB catalyzes the oxidative rearrangement to yield 15-deoxyoxalicine B. In the absence of olcJ, decaturin E may be shunted to a pathway in which it is oxidized to a ketone, possibly by olcF, to form decaturin D, which undergoes further allylic oxidation to yield decaturin G. Moreover, in the absence of oclK or oclL, oclB can convert decaturin C into 15-deoxyoxalicine A. The sequence is that of Cytochrome P450 monooxygenase olcB from Penicillium canescens.